A 185-amino-acid chain; its full sequence is Peptidyl-tRNA hydrolase (185 aa).

Residue Tyr14 participates in tRNA binding. His19 functions as the Proton acceptor in the catalytic mechanism. TRNA-binding residues include Phe64, Asn66, and Asn112.

It belongs to the PTH family. In terms of assembly, monomer.

The protein resides in the cytoplasm. It carries out the reaction an N-acyl-L-alpha-aminoacyl-tRNA + H2O = an N-acyl-L-amino acid + a tRNA + H(+). Hydrolyzes ribosome-free peptidyl-tRNAs (with 1 or more amino acids incorporated), which drop off the ribosome during protein synthesis, or as a result of ribosome stalling. In terms of biological role, catalyzes the release of premature peptidyl moieties from peptidyl-tRNA molecules trapped in stalled 50S ribosomal subunits, and thus maintains levels of free tRNAs and 50S ribosomes. This is Peptidyl-tRNA hydrolase from Lacticaseibacillus casei (strain BL23) (Lactobacillus casei).